Here is a 226-residue protein sequence, read N- to C-terminus: Biosynthetic peptidoglycan transglycosylase (226 aa).

The chain crosses the membrane as a helical span at residues 5 to 25 (IGVTVLAVVGLLLLPYLLTPL).

It belongs to the glycosyltransferase 51 family.

Its subcellular location is the cell inner membrane. The enzyme catalyses [GlcNAc-(1-&gt;4)-Mur2Ac(oyl-L-Ala-gamma-D-Glu-L-Lys-D-Ala-D-Ala)](n)-di-trans,octa-cis-undecaprenyl diphosphate + beta-D-GlcNAc-(1-&gt;4)-Mur2Ac(oyl-L-Ala-gamma-D-Glu-L-Lys-D-Ala-D-Ala)-di-trans,octa-cis-undecaprenyl diphosphate = [GlcNAc-(1-&gt;4)-Mur2Ac(oyl-L-Ala-gamma-D-Glu-L-Lys-D-Ala-D-Ala)](n+1)-di-trans,octa-cis-undecaprenyl diphosphate + di-trans,octa-cis-undecaprenyl diphosphate + H(+). It participates in cell wall biogenesis; peptidoglycan biosynthesis. Peptidoglycan polymerase that catalyzes glycan chain elongation from lipid-linked precursors. The polypeptide is Biosynthetic peptidoglycan transglycosylase (Nitrobacter hamburgensis (strain DSM 10229 / NCIMB 13809 / X14)).